Reading from the N-terminus, the 333-residue chain is Phenylalanine--tRNA ligase alpha subunit (333 aa).

Glu-258 lines the Mg(2+) pocket.

Belongs to the class-II aminoacyl-tRNA synthetase family. Phe-tRNA synthetase alpha subunit type 1 subfamily. In terms of assembly, tetramer of two alpha and two beta subunits. Mg(2+) serves as cofactor.

The protein resides in the cytoplasm. The enzyme catalyses tRNA(Phe) + L-phenylalanine + ATP = L-phenylalanyl-tRNA(Phe) + AMP + diphosphate + H(+). This Wigglesworthia glossinidia brevipalpis protein is Phenylalanine--tRNA ligase alpha subunit.